The sequence spans 127 residues: Glycine cleavage system H protein (127 aa).

Positions 24–105 (TALVGITDFA…YGSGWMVKMK (82 aa)) constitute a Lipoyl-binding domain. Lysine 65 is modified (N6-lipoyllysine).

It belongs to the GcvH family. As to quaternary structure, the glycine cleavage system is composed of four proteins: P, T, L and H. Requires (R)-lipoate as cofactor.

In terms of biological role, the glycine cleavage system catalyzes the degradation of glycine. The H protein shuttles the methylamine group of glycine from the P protein to the T protein. The polypeptide is Glycine cleavage system H protein (Chlorobium luteolum (strain DSM 273 / BCRC 81028 / 2530) (Pelodictyon luteolum)).